Reading from the N-terminus, the 791-residue chain is Nuclear cap-binding protein subunit 1-B (791 aa).

A disordered region spans residues 1–24 (MSRRRHSDENDGGQPHKRRRTSEP). An MIF4G domain is found at 28–240 (EDRLESLICR…CLWAQVQKLK (213 aa)). Residues 641–714 (LHSTIRKMNK…SEQKNLFLVI (74 aa)) are a coiled coil. The tract at residues 664 to 687 (QRLAKQHKHRDSDDNDEDSGRKDG) is disordered.

It belongs to the NCBP1 family. In terms of assembly, component of the nuclear cap-binding complex (CBC), a heterodimer composed of ncbp1/cbp80 and ncbp2/cbp20 that interacts with m7GpppG-capped RNA. Component of an alternative nuclear cap-binding complex (CBC) composed of ncbp1/cbp80 and ncbp3.

The protein localises to the nucleus. It is found in the cytoplasm. In terms of biological role, component of the cap-binding complex (CBC), which binds cotranscriptionally to the 5'-cap of pre-mRNAs and is involved in various processes such as pre-mRNA splicing, translation regulation, nonsense-mediated mRNA decay, RNA-mediated gene silencing (RNAi) by microRNAs (miRNAs) and mRNA export. The CBC complex is involved in mRNA export from the nucleus, leading to the recruitment of the mRNA export machinery to the 5'-end of mRNA and to mRNA export in a 5' to 3' direction through the nuclear pore. The CBC complex is also involved in mediating U snRNA and intronless mRNAs export from the nucleus. The CBC complex is essential for a pioneer round of mRNA translation, before steady state translation when the CBC complex is replaced by cytoplasmic cap-binding protein eIF4E. The pioneer round of mRNA translation mediated by the CBC complex plays a central role in nonsense-mediated mRNA decay (NMD), NMD only taking place in mRNAs bound to the CBC complex, but not on eIF4E-bound mRNAs. The CBC complex enhances NMD in mRNAs containing at least one exon-junction complex (EJC), promoting the interaction between UPF1 and UPF2. The CBC complex is also involved in 'failsafe' NMD, which is independent of the EJC complex, while it does not participate in Staufen-mediated mRNA decay (SMD). During cell proliferation, the CBC complex is also involved in microRNAs (miRNAs) biogenesis via its interaction with SRRT/ARS2 and is required for miRNA-mediated RNA interference. The CBC complex also acts as a negative regulator of parn, thereby acting as an inhibitor of mRNA deadenylation. In the CBC complex, NCBP1/CBP80 does not bind directly capped RNAs (m7GpppG-capped RNA) but is required to stabilize the movement of the N-terminal loop of NCBP2/CBP20 and lock the CBC into a high affinity cap-binding state with the cap structure. Associates with NCBP3 to form an alternative cap-binding complex (CBC) which plays a key role in mRNA export. The conventional CBC with NCBP2 binds both small nuclear RNA (snRNA) and messenger (mRNA) and is involved in their export from the nucleus whereas the alternative CBC with NCBP3 does not bind snRNA and associates only with mRNA thereby playing a role only in mRNA export. The protein is Nuclear cap-binding protein subunit 1-B (ncbp1-b) of Xenopus laevis (African clawed frog).